A 448-amino-acid polypeptide reads, in one-letter code: Na(+)-translocating NADH-quinone reductase subunit A (448 aa).

This sequence belongs to the NqrA family. Composed of six subunits; NqrA, NqrB, NqrC, NqrD, NqrE and NqrF.

The catalysed reaction is a ubiquinone + n Na(+)(in) + NADH + H(+) = a ubiquinol + n Na(+)(out) + NAD(+). NQR complex catalyzes the reduction of ubiquinone-1 to ubiquinol by two successive reactions, coupled with the transport of Na(+) ions from the cytoplasm to the periplasm. NqrA to NqrE are probably involved in the second step, the conversion of ubisemiquinone to ubiquinol. In Glaesserella parasuis serovar 5 (strain SH0165) (Haemophilus parasuis), this protein is Na(+)-translocating NADH-quinone reductase subunit A.